The primary structure comprises 342 residues: Phosphoribosylformylglycinamidine cyclo-ligase (342 aa).

This sequence belongs to the AIR synthase family.

It is found in the cytoplasm. It catalyses the reaction 2-formamido-N(1)-(5-O-phospho-beta-D-ribosyl)acetamidine + ATP = 5-amino-1-(5-phospho-beta-D-ribosyl)imidazole + ADP + phosphate + H(+). Its pathway is purine metabolism; IMP biosynthesis via de novo pathway; 5-amino-1-(5-phospho-D-ribosyl)imidazole from N(2)-formyl-N(1)-(5-phospho-D-ribosyl)glycinamide: step 2/2. In Staphylococcus aureus (strain USA300), this protein is Phosphoribosylformylglycinamidine cyclo-ligase.